The sequence spans 631 residues: NADPH oxidoreductase A (631 aa).

One can recognise a Flavodoxin-like domain in the interval 73 to 212; sequence ILILYGTEYG…CFDRYIDTVC (140 aa). Residues 79-83 and 160-191 each bind FMN; these read TEYGL and VLAL…KRFR. Positions 247–480 constitute an FAD-binding FR-type domain; that stretch reads KKPYSSKLLV…INNNPDFRLP (234 aa). FAD is bound at residue 249–299; the sequence is PYSSKLLVKRVLTKGDKVGIHLEFELGDSELKYVPGDALAILPDNAASEVS. 504–630 lines the NADP(+) pocket; sequence QERKALGHTG…KEKRYQKDVW (127 aa).

Requires FAD as cofactor. The cofactor is FMN.

Probable NADPH oxidoreductase that controls development beyond the mound stage. The polypeptide is NADPH oxidoreductase A (redA) (Dictyostelium discoideum (Social amoeba)).